Here is an 800-residue protein sequence, read N- to C-terminus: Phenylalanine--tRNA ligase beta subunit (800 aa).

The tRNA-binding domain maps to 39–154 (TKDIKNLVVG…ESQVPGTDAL (116 aa)). The 76-residue stretch at 408–483 (AFITPIDITA…RIYGYDDIPS (76 aa)) folds into the B5 domain. Mg(2+) contacts are provided by aspartate 461, aspartate 467, glutamate 470, and glutamate 471. The 93-residue stretch at 708–800 (PRFPGMSRDI…ALIEQGAVIR (93 aa)) folds into the FDX-ACB domain.

The protein belongs to the phenylalanyl-tRNA synthetase beta subunit family. Type 1 subfamily. Tetramer of two alpha and two beta subunits. Mg(2+) is required as a cofactor.

The protein localises to the cytoplasm. It catalyses the reaction tRNA(Phe) + L-phenylalanine + ATP = L-phenylalanyl-tRNA(Phe) + AMP + diphosphate + H(+). The protein is Phenylalanine--tRNA ligase beta subunit of Staphylococcus aureus (strain MSSA476).